We begin with the raw amino-acid sequence, 308 residues long: Ribosomal RNA large subunit methyltransferase F (308 aa).

The protein belongs to the methyltransferase superfamily. METTL16/RlmF family.

Its subcellular location is the cytoplasm. It carries out the reaction adenosine(1618) in 23S rRNA + S-adenosyl-L-methionine = N(6)-methyladenosine(1618) in 23S rRNA + S-adenosyl-L-homocysteine + H(+). Its function is as follows. Specifically methylates the adenine in position 1618 of 23S rRNA. The polypeptide is Ribosomal RNA large subunit methyltransferase F (Salmonella arizonae (strain ATCC BAA-731 / CDC346-86 / RSK2980)).